Consider the following 217-residue polypeptide: ATP phosphoribosyltransferase (217 aa).

Belongs to the ATP phosphoribosyltransferase family. Short subfamily. As to quaternary structure, heteromultimer composed of HisG and HisZ subunits.

Its subcellular location is the cytoplasm. It catalyses the reaction 1-(5-phospho-beta-D-ribosyl)-ATP + diphosphate = 5-phospho-alpha-D-ribose 1-diphosphate + ATP. The protein operates within amino-acid biosynthesis; L-histidine biosynthesis; L-histidine from 5-phospho-alpha-D-ribose 1-diphosphate: step 1/9. Catalyzes the condensation of ATP and 5-phosphoribose 1-diphosphate to form N'-(5'-phosphoribosyl)-ATP (PR-ATP). Has a crucial role in the pathway because the rate of histidine biosynthesis seems to be controlled primarily by regulation of HisG enzymatic activity. The protein is ATP phosphoribosyltransferase of Burkholderia multivorans (strain ATCC 17616 / 249).